A 42-amino-acid polypeptide reads, in one-letter code: uncharacterized protein (42 aa).

This is an uncharacterized protein from Treponema pallidum (strain Nichols).